The chain runs to 381 residues: L-lactate dehydrogenase (381 aa).

An FMN hydroxy acid dehydrogenase domain is found at M1–K380. Y24 contributes to the substrate binding site. Positions 106 and 127 each coordinate FMN. Position 129 (Y129) interacts with substrate. Residue T155 coordinates FMN. Substrate is bound at residue R164. K251 is an FMN binding site. The active-site Proton acceptor is the H275. R278 lines the substrate pocket. D306–R330 contributes to the FMN binding site.

Belongs to the FMN-dependent alpha-hydroxy acid dehydrogenase family. Requires FMN as cofactor.

It localises to the cell inner membrane. It catalyses the reaction (S)-lactate + A = pyruvate + AH2. Functionally, catalyzes the conversion of L-lactate to pyruvate. Is coupled to the respiratory chain. The chain is L-lactate dehydrogenase from Actinobacillus pleuropneumoniae serotype 3 (strain JL03).